An 83-amino-acid polypeptide reads, in one-letter code: CLAVATA3/ESR (CLE)-related protein 3 (83 aa).

Positions 1–24 (MASLKLWVCLVLLLVLELTSVHEC) are cleaved as a signal peptide. The stretch at 38 to 58 (RLKKIRRELFERLKEMKGRSE) forms a coiled coil. The segment at 53-83 (MKGRSEGEETILGNTLDSKRLSPGGPDPRHH) is disordered. 2 positions are modified to hydroxyproline: P75 and P78. A glycan (O-linked (Ara...) hydroxyproline) is linked at P78.

Belongs to the CLV3/ESR signal peptide family. Post-translationally, the O-glycosylation (arabinosylation) of the hydroxyproline Pro-78 enhances binding affinity of the CLE3p peptide for its receptor. Mostly expressed in roots, stems and apex, and, to a lower extent, in seedlings, leaves, flowers, siliques and pollen.

Its subcellular location is the secreted. It is found in the extracellular space. Its function is as follows. Extracellular signal peptide that regulates cell fate. The sequence is that of CLAVATA3/ESR (CLE)-related protein 3 from Arabidopsis thaliana (Mouse-ear cress).